Reading from the N-terminus, the 842-residue chain is Type VI secretion system spike protein VgrG2a (842 aa).

The tract at residues 265–291 is disordered; it reads RSGAGRPFSESRLRGHRRDARVASVSG.

Belongs to the VgrG protein family.

Its function is as follows. Part of the H2 type VI secretion system (H2-T6SS) specialized secretion system, which delivers several virulence factors in both prokaryotic and eukaryotic cells during infection. May form the spike at the tip of the elongating tube formed by haemolysin co-regulated protein 2a/Hcp2a. In turn, may allow the delivery of the Tle4 antibacterial toxin to target cells where it exerts its toxicity. Also promotes the release of VgrG2b toxin to the host cell. The sequence is that of Type VI secretion system spike protein VgrG2a from Pseudomonas aeruginosa (strain ATCC 15692 / DSM 22644 / CIP 104116 / JCM 14847 / LMG 12228 / 1C / PRS 101 / PAO1).